Reading from the N-terminus, the 244-residue chain is Gamma-gliadin (244 aa).

Residues 18–64 (QQPFLQQPQQPSPQPQQVVQIISPATPTTIPSAGKPTSAPFPQQQQQ) are disordered. Over residues 35 to 48 (VVQIISPATPTTIP) the composition is skewed to polar residues.

The protein belongs to the gliadin/glutenin family.

Its function is as follows. Gliadin is the major seed storage protein in wheat. In Triticum aestivum (Wheat), this protein is Gamma-gliadin.